Here is a 204-residue protein sequence, read N- to C-terminus: 3-isopropylmalate dehydratase small subunit (204 aa).

This sequence belongs to the LeuD family. LeuD type 1 subfamily. As to quaternary structure, heterodimer of LeuC and LeuD.

The enzyme catalyses (2R,3S)-3-isopropylmalate = (2S)-2-isopropylmalate. The protein operates within amino-acid biosynthesis; L-leucine biosynthesis; L-leucine from 3-methyl-2-oxobutanoate: step 2/4. Catalyzes the isomerization between 2-isopropylmalate and 3-isopropylmalate, via the formation of 2-isopropylmaleate. This Roseiflexus castenholzii (strain DSM 13941 / HLO8) protein is 3-isopropylmalate dehydratase small subunit.